We begin with the raw amino-acid sequence, 159 residues long: Transcription elongation factor GreA (159 aa).

Residues 7 to 72 adopt a coiled-coil conformation; it reads MTVRGAEKLR…IQEIESKLSN (66 aa).

It belongs to the GreA/GreB family.

In terms of biological role, necessary for efficient RNA polymerase transcription elongation past template-encoded arresting sites. The arresting sites in DNA have the property of trapping a certain fraction of elongating RNA polymerases that pass through, resulting in locked ternary complexes. Cleavage of the nascent transcript by cleavage factors such as GreA or GreB allows the resumption of elongation from the new 3'terminus. GreA releases sequences of 2 to 3 nucleotides. The protein is Transcription elongation factor GreA of Buchnera aphidicola subsp. Schizaphis graminum (strain Sg).